The following is a 253-amino-acid chain: Ubiquinone/menaquinone biosynthesis C-methyltransferase UbiE (253 aa).

S-adenosyl-L-methionine contacts are provided by residues T76, D97, and 125–126 (NA).

It belongs to the class I-like SAM-binding methyltransferase superfamily. MenG/UbiE family.

It carries out the reaction a 2-demethylmenaquinol + S-adenosyl-L-methionine = a menaquinol + S-adenosyl-L-homocysteine + H(+). The enzyme catalyses a 2-methoxy-6-(all-trans-polyprenyl)benzene-1,4-diol + S-adenosyl-L-methionine = a 5-methoxy-2-methyl-3-(all-trans-polyprenyl)benzene-1,4-diol + S-adenosyl-L-homocysteine + H(+). It functions in the pathway quinol/quinone metabolism; menaquinone biosynthesis; menaquinol from 1,4-dihydroxy-2-naphthoate: step 2/2. It participates in cofactor biosynthesis; ubiquinone biosynthesis. In terms of biological role, methyltransferase required for the conversion of demethylmenaquinol (DMKH2) to menaquinol (MKH2) and the conversion of 2-polyprenyl-6-methoxy-1,4-benzoquinol (DDMQH2) to 2-polyprenyl-3-methyl-6-methoxy-1,4-benzoquinol (DMQH2). The sequence is that of Ubiquinone/menaquinone biosynthesis C-methyltransferase UbiE from Stenotrophomonas maltophilia (strain K279a).